Reading from the N-terminus, the 551-residue chain is CTP synthase (551 aa).

Positions M1–L265 are amidoligase domain. S13 serves as a coordination point for CTP. S13 serves as a coordination point for UTP. ATP contacts are provided by residues S14–I19 and D71. Residues D71 and E139 each contribute to the Mg(2+) site. CTP is bound by residues D146–E148, K186–Q191, and K222. UTP is bound by residues K186–Q191 and K222. Positions T290 to G541 constitute a Glutamine amidotransferase type-1 domain. G351 lines the L-glutamine pocket. C378 serves as the catalytic Nucleophile; for glutamine hydrolysis. Residues L379–Q382, E402, and R469 each bind L-glutamine. Residues H514 and E516 contribute to the active site.

The protein belongs to the CTP synthase family. Homotetramer.

It catalyses the reaction UTP + L-glutamine + ATP + H2O = CTP + L-glutamate + ADP + phosphate + 2 H(+). It carries out the reaction L-glutamine + H2O = L-glutamate + NH4(+). The catalysed reaction is UTP + NH4(+) + ATP = CTP + ADP + phosphate + 2 H(+). The protein operates within pyrimidine metabolism; CTP biosynthesis via de novo pathway; CTP from UDP: step 2/2. Its activity is regulated as follows. Allosterically activated by GTP, when glutamine is the substrate; GTP has no effect on the reaction when ammonia is the substrate. The allosteric effector GTP functions by stabilizing the protein conformation that binds the tetrahedral intermediate(s) formed during glutamine hydrolysis. Inhibited by the product CTP, via allosteric rather than competitive inhibition. Its function is as follows. Catalyzes the ATP-dependent amination of UTP to CTP with either L-glutamine or ammonia as the source of nitrogen. Regulates intracellular CTP levels through interactions with the four ribonucleotide triphosphates. The sequence is that of CTP synthase from Halorhodospira halophila (strain DSM 244 / SL1) (Ectothiorhodospira halophila (strain DSM 244 / SL1)).